The sequence spans 179 residues: Large ribosomal subunit protein uL6 (179 aa).

It belongs to the universal ribosomal protein uL6 family. Part of the 50S ribosomal subunit.

Its function is as follows. This protein binds to the 23S rRNA, and is important in its secondary structure. It is located near the subunit interface in the base of the L7/L12 stalk, and near the tRNA binding site of the peptidyltransferase center. The chain is Large ribosomal subunit protein uL6 from Acidothermus cellulolyticus (strain ATCC 43068 / DSM 8971 / 11B).